A 453-amino-acid chain; its full sequence is ACT domain-containing protein ACR3 (453 aa).

4 consecutive ACT domains span residues 37 to 112 (LVKV…SASQ), 130 to 212 (SIEI…KFAR), 266 to 341 (VINV…RVSE), and 344 to 423 (SLEL…VPSR).

Expressed in roots, cotyledons, rosette and cauline leaves, sepals, style, and pedicels and tips of young developing siliques.

Its function is as follows. May bind amino acids. The chain is ACT domain-containing protein ACR3 from Arabidopsis thaliana (Mouse-ear cress).